Here is a 137-residue protein sequence, read N- to C-terminus: Large ribosomal subunit protein uL16 (137 aa).

The protein belongs to the universal ribosomal protein uL16 family. In terms of assembly, part of the 50S ribosomal subunit.

Binds 23S rRNA and is also seen to make contacts with the A and possibly P site tRNAs. In Coxiella burnetii (strain RSA 331 / Henzerling II), this protein is Large ribosomal subunit protein uL16.